The sequence spans 141 residues: Large ribosomal subunit protein mL42 (141 aa).

The transit peptide at 1 to 31 directs the protein to the mitochondrion; it reads MTAAVKWAVSHRTIWRHLFPIQNGAISSACH.

Belongs to the mitochondrion-specific ribosomal protein mL42 family. In terms of assembly, component of the mitochondrial ribosome large subunit (39S) which comprises a 16S rRNA and about 50 distinct proteins. Component of the mitochondrial ribosome small subunit (28S) which comprises a 12S rRNA and about 30 distinct proteins.

Its subcellular location is the mitochondrion. The sequence is that of Large ribosomal subunit protein mL42 (Mrpl42) from Rattus norvegicus (Rat).